The primary structure comprises 650 residues: Laccase-like multicopper oxidase 1 (650 aa).

A signal peptide spans 1–20; sequence MLLSKLSILLAKWLSVAVYA. 3 consecutive Plastocyanin-like domains span residues 41-151, 162-360, and 439-595; these read QVPS…IVED, ERIL…LRYN, and KPVL…VVGD. The cysteines at positions 46 and 254 are disulfide-linked. Residues asparagine 55 and asparagine 83 are each glycosylated (N-linked (GlcNAc...) asparagine). Residues histidine 87, histidine 89, histidine 133, and histidine 135 each coordinate Cu cation. Cu cation contacts are provided by histidine 501, histidine 504, histidine 506, histidine 576, cysteine 577, histidine 578, and histidine 582. N-linked (GlcNAc...) asparagine glycosylation is present at asparagine 620.

Belongs to the multicopper oxidase family. Monomer. In terms of processing, N-glycosylation Asn-55 and Asn-83 is involved in folding, conformational stability and laccase activity.

It carries out the reaction 2 2',3,4-trihydroxy-trans-chalcone + O2 + 2 H(+) = 2 3',4'-dihydroxyaurone + 2 H2O. Retains almost half of its activity in presence of high salt concentrations up to 100 mM NaCl. Retains also more than 85% of its original activity in the presence of 1 mM EDTA, indicating a satisfactory resistance towards chelators, which is rare among metal-containing enzyme. The activity drops significantly in the presence of NaN(3) or SDS. Appears more active in the presence of methanol compared to ethanol, but acetone or DMSO addition severely affect remaining laccase activity. In terms of biological role, yellow laccase-like multicopper oxidase that is able to oxidize a variety of phenolic compounds including standard laccase substrates such as 2'-azino-bis(3-ethylbenzothiazoline-6-sulphonic acid) (ABTS) and 2,6-dimethoxyphenol (2,6-DMP). The existence of an ortho-hydroxy group is crucial for oxidation since pyrogallol and catechol, which contain ortho-hydroxy groups, are readily oxidized, which is not the case for resorcinol and hydroquinone, that contain meta- and para-hydroxy groups, respectively. The same is also true for the existence of a methoxy group in an ortho-position, since 2,6-DMP, guaiacol and ferulic and caffeic acids are also rather easily oxidized compared with the corresponding unsubstituted compound. Can be used for the bioconversion of 2',3,4-trihy-droxychalcone to 3',4'-dihydroxy-aurone, a bioactive aurone recently shown to possess inhibitory activity against several isoforms of the histone deacetylase complex (HDAC). The chain is Laccase-like multicopper oxidase 1 from Thermothelomyces thermophilus (strain ATCC 42464 / BCRC 31852 / DSM 1799) (Sporotrichum thermophile).